We begin with the raw amino-acid sequence, 381 residues long: 5-cytosine rRNA methyltransferase NSUN4 (381 aa).

The transit peptide at 1-25 (MAAPVLRCVRKLLKLVDFTPVPRRY) directs the protein to the mitochondrion. Residues Gly-182, Gly-183, Lys-184, and Asp-201 each coordinate S-adenosyl-L-methionine. Residue Ser-203 is modified to Phosphoserine. Residues Arg-206, Asp-234, Gly-235, and Asp-252 each contribute to the S-adenosyl-L-methionine site. Cys-307 acts as the Nucleophile in catalysis.

Belongs to the class I-like SAM-binding methyltransferase superfamily. RsmB/NOP family. In terms of assembly, heterodimer with MTERFD2/MTERF4; this interaction seems to be required for NSUN4 recruitment to the mitochondrial large ribosomal subunit.

Its subcellular location is the mitochondrion. The enzyme catalyses a cytidine in rRNA + S-adenosyl-L-methionine = a 5-methylcytidine in rRNA + S-adenosyl-L-homocysteine + H(+). The catalysed reaction is a cytidine in mRNA + S-adenosyl-L-methionine = a 5-methylcytidine in mRNA + S-adenosyl-L-homocysteine + H(+). Functionally, mitochondrial RNA cytosine C(5)-methyltransferase that methylates cytosine to 5-methylcytosine (m5C) in various RNAs, such as rRNAs, mRNAs and some long non-coding RNAs (lncRNAs). Involved in mitochondrial ribosome small subunit (SSU) maturation by catalyzing methylation of mitochondrial 12S rRNA; the function is independent of MTERFD2/MTERF4 and assembled mitochondrial ribosome large subunit (LSU). Targeted to LSU by MTERFD2/MTERF4 and probably is involved in a final step in ribosome biogenesis to ensure that SSU and LSU are assembled. In vitro can methylate 16S rRNA of the LSU; the methylation is enhanced by MTERFD/MTERF4. Also acts as a regulator of innate immunity by marking double-stranded mitochondrial RNAs(mt-dsRNAs) generated in response to stress: catalyzes m5C modification on mitochondrial RNAs, such as a mRNAs and lncRNAs, with a preference for the termini of light-strand lncRNAs, promoting their degradation and cytosolic release. Modified light-strand lncRNAs are then recognized by C1QBP reader and recruited to the mitochondrial degradosome complex, which promotes their degradation. The protein is 5-cytosine rRNA methyltransferase NSUN4 of Mus musculus (Mouse).